Here is a 308-residue protein sequence, read N- to C-terminus: Dipeptide transport system permease protein DppB (308 aa).

A run of 7 helical transmembrane segments spans residues 10 to 30 (WAMA…MKVI), 59 to 79 (LIFQ…GPSI), 100 to 120 (LGMT…VIAA), 131 to 151 (AMSL…TLLI), 168 to 188 (SPIH…AIIA), 228 to 248 (MPVI…SFVI), and 278 to 298 (VFYS…YGLL). Residues 94 to 295 (FPVSFELGMT…IMLFLVDLAY (202 aa)) enclose the ABC transmembrane type-1 domain.

Belongs to the binding-protein-dependent transport system permease family. OppBC subfamily.

It localises to the cell membrane. Its function is as follows. Probably part of the ABC transporter DppBCDE involved in dipeptide transport. Responsible for the translocation of the substrate across the membrane. This chain is Dipeptide transport system permease protein DppB (dppB), found in Bacillus subtilis (strain 168).